The primary structure comprises 925 residues: Ectonucleotide pyrophosphatase/phosphodiesterase family member 1 (925 aa).

Residues 1-17 (MERDGCAGGGSRGGEGG) are compositionally biased toward gly residues. Positions 1–43 (MERDGCAGGGSRGGEGGRAPREGPAGNGRDRGRSHAAEAPGDP) are disordered. The Cytoplasmic segment spans residues 1-76 (MERDGCAGGG…RTAKDPNTYK (76 aa)). Positions 45–52 (AAASLLAP) match the Di-leucine motif motif. The chain crosses the membrane as a helical; Signal-anchor for type II membrane protein span at residues 77 to 97 (VLSLVLSVCVLTTILGCIFGL). Residues 98-925 (KPSCAKEVKS…THLPTFSQED (828 aa)) are Extracellular-facing. SMB domains are found at residues 104–144 (EVKS…IEPE) and 145–189 (HIWT…GEKS). Disulfide bonds link Cys108–Cys122, Cys112–Cys140, Cys120–Cys133, Cys126–Cys132, Cys149–Cys166, Cys154–Cys184, Cys164–Cys177, Cys170–Cys176, Cys195–Cys241, and Cys203–Cys415. N-linked (GlcNAc...) asparagine glycosylation is present at Asn179. The interval 191–591 (VEEPCESINE…APNNGTHGSL (401 aa)) is phosphodiesterase. Residues Asp218, Thr256, and Asn277 each coordinate AMP. Positions 218 and 256 each coordinate Zn(2+). The AMP-threonine intermediate role is filled by Thr256. 2 residues coordinate CMP: Thr256 and Asn277. DTMP-binding residues include Thr256 and Asn277. Residues Thr256 and Asn277 each coordinate GMP. Thr256 bears the Phosphothreonine mark. A glycan (N-linked (GlcNAc...) asparagine) is linked at Asn285. Residues Leu290, Lys295, and Tyr340 each coordinate GMP. Positions 295 and 340 each coordinate AMP. CMP contacts are provided by Lys295 and Tyr340. Tyr340 serves as a coordination point for dTMP. Asn341 is a glycosylation site (N-linked (GlcNAc...) asparagine). Asp376 provides a ligand contact to AMP. 4 residues coordinate Zn(2+): Asp376, His380, Asp423, and His424. Asp376 lines the CMP pocket. Asp376 contributes to the dTMP binding site. GMP is bound at residue Asp376. Position 380 (His380) interacts with 2',3'-cGAMP. His424 serves as a coordination point for AMP. Position 424 (His424) interacts with CMP. His424 is a dTMP binding site. His424 is a GMP binding site. 6 disulfide bridges follow: Cys431/Cys530, Cys480/Cys868, Cys614/Cys672, Cys626/Cys726, Cys628/Cys711, and Cys838/Cys848. N-linked (GlcNAc...) asparagine glycosylation occurs at Asn477. Ser532 serves as a coordination point for 2',3'-cGAMP. His535 contacts AMP. His535 is a Zn(2+) binding site. Residue His535 participates in CMP binding. Residue His535 coordinates dTMP. His535 is a GMP binding site. N-linked (GlcNAc...) asparagine glycosylation is found at Asn585, Asn643, Asn700, Asn731, and Asn748. The linker stretch occupies residues 597–647 (NPVYTPKHPKEVHPLVQCPFTRNPRDNLGCSCNPSILPIEDFQTQFNLTVA). The tract at residues 654 to 925 (HETLPYGRPR…THLPTFSQED (272 aa)) is nuclease-like domain. The Ca(2+) site is built by Asp800, Asp802, Asp804, Arg806, and Asp808.

This sequence belongs to the nucleotide pyrophosphatase/phosphodiesterase family. Homodimer. Interacts with INSR; leading to inhibit INSR autophosphorylation and subsequent activation of INSR kinase activity. As to quaternary structure, monomeric. Requires Zn(2+) as cofactor. In terms of processing, autophosphorylated as part of the catalytic cycle of phosphodiesterase/pyrophosphatase activity. N-glycosylated. Post-translationally, the secreted form is produced through cleavage at Lys-103 by intracellular processing. Expressed in plasma cells and also in a number of non-lymphoid tissues, including the distal convoluted tubule of the kidney, chondrocytes and epididymis. Expressed in melanocytes but not in keratinocytes.

The protein localises to the cell membrane. The protein resides in the basolateral cell membrane. It is found in the secreted. It carries out the reaction Hydrolytically removes 5'-nucleotides successively from the 3'-hydroxy termini of 3'-hydroxy-terminated oligonucleotides.. The catalysed reaction is a ribonucleoside 5'-triphosphate + H2O = a ribonucleoside 5'-phosphate + diphosphate + H(+). The enzyme catalyses ATP + H2O = AMP + diphosphate + H(+). It catalyses the reaction UTP + H2O = UMP + diphosphate + H(+). It carries out the reaction GTP + H2O = GMP + diphosphate + H(+). The catalysed reaction is CTP + H2O = CMP + diphosphate + H(+). The enzyme catalyses 2',3'-cGAMP + 2 H2O = GMP + AMP + 2 H(+). It catalyses the reaction P(1),P(4)-bis(5'-adenosyl) tetraphosphate + H2O = AMP + ATP + 2 H(+). It carries out the reaction 3',5'-cyclic AMP + H2O = AMP + H(+). Its activity is regulated as follows. At low concentrations of ATP, a phosphorylated intermediate is formed which inhibits further hydrolysis. Its function is as follows. Nucleotide pyrophosphatase that generates diphosphate (PPi) and functions in bone mineralization and soft tissue calcification by regulating pyrophosphate levels. PPi inhibits bone mineralization and soft tissue calcification by binding to nascent hydroxyapatite crystals, thereby preventing further growth of these crystals. Preferentially hydrolyzes ATP, but can also hydrolyze other nucleoside 5' triphosphates such as GTP, CTP and UTP to their corresponding monophosphates with release of pyrophosphate, as well as diadenosine polyphosphates, and also 3',5'-cAMP to AMP. May also be involved in the regulation of the availability of nucleotide sugars in the endoplasmic reticulum and Golgi, and the regulation of purinergic signaling. Inhibits ectopic joint calcification and maintains articular chondrocytes by repressing hedgehog signaling; it is however unclear whether hedgehog inhibition is direct or indirect. Appears to modulate insulin sensitivity and function. Also involved in melanogenesis. Also able to hydrolyze 2',3'-cGAMP (cyclic GMP-AMP), a second messenger that activates TMEM173/STING and triggers type-I interferon production. 2',3'-cGAMP degradation takes place in the lumen or extracellular space, and not in the cytosol where it is produced; the role of 2',3'-cGAMP hydrolysis is therefore unclear. Not able to hydrolyze the 2',3'-cGAMP linkage isomer 3'-3'-cGAMP. This Homo sapiens (Human) protein is Ectonucleotide pyrophosphatase/phosphodiesterase family member 1.